The chain runs to 319 residues: Mitochondrial fission regulator 1-like (319 aa).

The interval 1-35 (MASLGAGAEPESVLFGKDGTEACESPEGRRSGRRK) is disordered.

This sequence belongs to the MTFR1 family.

The protein resides in the mitochondrion outer membrane. Its function is as follows. Mitochondrial protein required for adaptation of miochondrial dynamics to metabolic changes. Regulates mitochondrial morphology at steady state and mediates AMPK-dependent stress-induced mitochondrial fragmentation via the control of OPA1 levels. The protein is Mitochondrial fission regulator 1-like (mtfr1l) of Xenopus tropicalis (Western clawed frog).